A 110-amino-acid chain; its full sequence is UPF0145 protein Blon_0093/BLIJ_0092 (110 aa).

It belongs to the UPF0145 family.

In Bifidobacterium longum subsp. infantis (strain ATCC 15697 / DSM 20088 / JCM 1222 / NCTC 11817 / S12), this protein is UPF0145 protein Blon_0093/BLIJ_0092.